A 454-amino-acid polypeptide reads, in one-letter code: Growth/differentiation factor 9 (454 aa).

The first 24 residues, 1-24 (MARPNKFLLWFCCFAWLCFPISLG), serve as a signal peptide directing secretion. A propeptide spanning residues 25 to 319 (SQASGGEAQI…GRSSHHRHRR (295 aa)) is cleaved from the precursor. Asparagine 106, asparagine 163, asparagine 236, asparagine 255, and asparagine 268 each carry an N-linked (GlcNAc...) asparagine glycan. Residues 303–330 (GEEAAEDGRSSHHRHRRGQETVSSELKK) are disordered. Phosphoserine; by CK is present on serine 325. The N-linked (GlcNAc...) asparagine glycan is linked to asparagine 338. 3 cysteine pairs are disulfide-bonded: cysteine 353–cysteine 419, cysteine 382–cysteine 451, and cysteine 386–cysteine 453.

Belongs to the TGF-beta family. In terms of assembly, homodimer or heterodimer (Potential). But, in contrast to other members of this family, cannot be disulfide-linked. Post-translationally, phosphorylated; phosphorylation is critical for GDF9 function. In vitro, can be phosphorylated by CK at Ser-325. Expressed in ovarian granulosa cells. Present in oocytes of primary follicles (at protein level).

The protein resides in the secreted. In terms of biological role, required for ovarian folliculogenesis. Promotes primordial follicle development. Stimulates granulosa cell proliferation. Promotes cell transition from G0/G1 to S and G2/M phases, through an increase of CCND1 and CCNE1 expression, and RB1 phosphorylation. It regulates STAR expression and cAMP-dependent progesterone release in granulosa and thecal cells. Attenuates the suppressive effects of activin A on STAR expression and progesterone production by increasing the expression of inhibin B. It suppresses FST and FSTL3 production in granulosa-lutein cells. The sequence is that of Growth/differentiation factor 9 (GDF9) from Homo sapiens (Human).